A 957-amino-acid polypeptide reads, in one-letter code: Protein translocase subunit SecA (957 aa).

Residues glutamine 86, 104–108 (GEGKT), and aspartate 494 contribute to the ATP site. Over residues 929 to 947 (SRPAPAPTAAASPDPSSAS) the composition is skewed to low complexity. The segment at 929–957 (SRPAPAPTAAASPDPSSASGVVEADFTEE) is disordered.

Belongs to the SecA family. Monomer and homodimer. Part of the essential Sec protein translocation apparatus which comprises SecA, SecYEG and auxiliary proteins SecDF. Other proteins may also be involved.

The protein resides in the cell inner membrane. It is found in the cellular thylakoid membrane. It localises to the cytoplasm. The catalysed reaction is ATP + H2O + cellular proteinSide 1 = ADP + phosphate + cellular proteinSide 2.. In terms of biological role, part of the Sec protein translocase complex. Interacts with the SecYEG preprotein conducting channel. Has a central role in coupling the hydrolysis of ATP to the transfer of proteins into and across the cell membrane, serving as an ATP-driven molecular motor driving the stepwise translocation of polypeptide chains across the membrane. Its function is as follows. Probably participates in protein translocation into and across both the cytoplasmic and thylakoid membranes in cyanobacterial cells. This Synechococcus sp. (strain JA-2-3B'a(2-13)) (Cyanobacteria bacterium Yellowstone B-Prime) protein is Protein translocase subunit SecA.